Reading from the N-terminus, the 101-residue chain is NAD(P)H-quinone oxidoreductase subunit 4L, chloroplastic (101 aa).

Transmembrane regions (helical) follow at residues L2 to I22, M32 to F52, and I61 to V81.

The protein belongs to the complex I subunit 4L family. NDH is composed of at least 16 different subunits, 5 of which are encoded in the nucleus.

The protein resides in the plastid. It localises to the chloroplast thylakoid membrane. It carries out the reaction a plastoquinone + NADH + (n+1) H(+)(in) = a plastoquinol + NAD(+) + n H(+)(out). The catalysed reaction is a plastoquinone + NADPH + (n+1) H(+)(in) = a plastoquinol + NADP(+) + n H(+)(out). NDH shuttles electrons from NAD(P)H:plastoquinone, via FMN and iron-sulfur (Fe-S) centers, to quinones in the photosynthetic chain and possibly in a chloroplast respiratory chain. The immediate electron acceptor for the enzyme in this species is believed to be plastoquinone. Couples the redox reaction to proton translocation, and thus conserves the redox energy in a proton gradient. The chain is NAD(P)H-quinone oxidoreductase subunit 4L, chloroplastic from Carica papaya (Papaya).